The sequence spans 573 residues: Splicing factor U2af large subunit B (573 aa).

The span at 1–12 (MPDYEGNGEDID) shows a compositional bias: acidic residues. Positions 1 to 187 (MPDYEGNGED…DMAPPTSAML (187 aa)) are disordered. The span at 38 to 145 (SDSKSQHSSR…QREHAKDRES (108 aa)) shows a compositional bias: basic and acidic residues. Over residues 161–173 (SRSRSRSRSKSKR) the composition is skewed to basic residues. RRM domains follow at residues 239–322 (RRVY…RPSD), 359–437 (DRIF…RANQ), and 478–564 (EVIS…YPEN).

Belongs to the splicing factor SR family. As to expression, expressed in stems, leaves and apical buds.

Its subcellular location is the nucleus. Necessary for the splicing of pre-mRNA. Binds to the U -enriched regions of plant introns. This Nicotiana plumbaginifolia (Leadwort-leaved tobacco) protein is Splicing factor U2af large subunit B (U2AF65B).